The following is a 153-amino-acid chain: UPF0251 protein Daud_0090 (153 aa).

Residues 129–138 (ELMTRPERCS) are compositionally biased toward basic and acidic residues. Residues 129–153 (ELMTRPERCSRPKRGAGKYRVPKKR) are disordered. The segment covering 139–153 (RPKRGAGKYRVPKKR) has biased composition (basic residues).

Belongs to the UPF0251 family.

This is UPF0251 protein Daud_0090 from Desulforudis audaxviator (strain MP104C).